Consider the following 375-residue polypeptide: Stomatin-2 (375 aa).

Residues M1–G75 form a disordered region. Low complexity predominate over residues S11–N50. A helical transmembrane segment spans residues G120–F140.

Belongs to the band 7/mec-2 family.

The protein localises to the membrane. Its function is as follows. May be involved in cilia-related function. This chain is Stomatin-2 (sto-2), found in Caenorhabditis elegans.